Here is a 238-residue protein sequence, read N- to C-terminus: Ribonuclease PH (238 aa).

Residues 66–88 form a disordered region; the sequence is LPRSTHTRSDREAARGKQSGRTQ. Phosphate is bound by residues R86 and 124–126; that span reads GTR.

Belongs to the RNase PH family. Homohexameric ring arranged as a trimer of dimers.

The catalysed reaction is tRNA(n+1) + phosphate = tRNA(n) + a ribonucleoside 5'-diphosphate. Its function is as follows. Phosphorolytic 3'-5' exoribonuclease that plays an important role in tRNA 3'-end maturation. Removes nucleotide residues following the 3'-CCA terminus of tRNAs; can also add nucleotides to the ends of RNA molecules by using nucleoside diphosphates as substrates, but this may not be physiologically important. Probably plays a role in initiation of 16S rRNA degradation (leading to ribosome degradation) during starvation. The chain is Ribonuclease PH from Ralstonia pickettii (strain 12J).